Consider the following 159-residue polypeptide: ATP synthase subunit b (159 aa).

Residues 2–22 (NISIPQIIAAILNFIILLLIV) traverse the membrane as a helical segment.

This sequence belongs to the ATPase B chain family. F-type ATPases have 2 components, F(1) - the catalytic core - and F(0) - the membrane proton channel. F(1) has five subunits: alpha(3), beta(3), gamma(1), delta(1), epsilon(1). F(0) has three main subunits: a(1), b(2) and c(10-14). The alpha and beta chains form an alternating ring which encloses part of the gamma chain. F(1) is attached to F(0) by a central stalk formed by the gamma and epsilon chains, while a peripheral stalk is formed by the delta and b chains.

It localises to the cell membrane. Its function is as follows. F(1)F(0) ATP synthase produces ATP from ADP in the presence of a proton or sodium gradient. F-type ATPases consist of two structural domains, F(1) containing the extramembraneous catalytic core and F(0) containing the membrane proton channel, linked together by a central stalk and a peripheral stalk. During catalysis, ATP synthesis in the catalytic domain of F(1) is coupled via a rotary mechanism of the central stalk subunits to proton translocation. Functionally, component of the F(0) channel, it forms part of the peripheral stalk, linking F(1) to F(0). This is ATP synthase subunit b from Clostridium botulinum (strain ATCC 19397 / Type A).